A 112-amino-acid polypeptide reads, in one-letter code: UPF0102 protein Pmob_0702 (112 aa).

The protein belongs to the UPF0102 family.

This chain is UPF0102 protein Pmob_0702, found in Petrotoga mobilis (strain DSM 10674 / SJ95).